Consider the following 417-residue polypeptide: NADH-quinone oxidoreductase subunit D (417 aa).

This sequence belongs to the complex I 49 kDa subunit family. As to quaternary structure, NDH-1 is composed of 14 different subunits. Subunits NuoB, C, D, E, F, and G constitute the peripheral sector of the complex.

It is found in the cell inner membrane. The enzyme catalyses a quinone + NADH + 5 H(+)(in) = a quinol + NAD(+) + 4 H(+)(out). Its function is as follows. NDH-1 shuttles electrons from NADH, via FMN and iron-sulfur (Fe-S) centers, to quinones in the respiratory chain. The immediate electron acceptor for the enzyme in this species is believed to be ubiquinone. Couples the redox reaction to proton translocation (for every two electrons transferred, four hydrogen ions are translocated across the cytoplasmic membrane), and thus conserves the redox energy in a proton gradient. The chain is NADH-quinone oxidoreductase subunit D from Francisella tularensis subsp. novicida (strain U112).